The following is a 141-amino-acid chain: Translation initiation factor IF-1, chloroplastic (141 aa).

The N-terminal 46 residues, 1–46 (MLQLCSTFRPQLLLPCQFRFTNGVLIPQINYVASNSVVNIRPMIRC), are a transit peptide targeting the chloroplast. A disordered region spans residues 49–69 (ASGGRGGANRSKPAKPQVKEG). The region spanning 63 to 138 (KPQVKEGSNK…TKGRIIFRMS (76 aa)) is the S1-like domain.

Belongs to the IF-1 family. As to quaternary structure, component of the 30S ribosomal translation pre-initiation complex which assembles on the 30S ribosome in the order IF-2 and IF-3, IF-1 and N-formylmethionyl-tRNA(fMet); mRNA recruitment can occur at any time during PIC assembly.

It localises to the plastid. It is found in the chloroplast. In terms of biological role, one of the essential components for the initiation of protein synthesis. Stabilizes the binding of IF-2 and IF-3 on the 30S subunit to which N-formylmethionyl-tRNA(fMet) subsequently binds. Helps modulate mRNA selection, yielding the 30S pre-initiation complex (PIC). Upon addition of the 50S ribosomal subunit IF-1, IF-2 and IF-3 are released leaving the mature 70S translation initiation complex. The protein is Translation initiation factor IF-1, chloroplastic of Arabidopsis thaliana (Mouse-ear cress).